The primary structure comprises 56 residues: UPF0391 membrane protein HCH_04387 (56 aa).

2 helical membrane passes run 6-26 (IVFFVVALVAGVLGFTGIAAA) and 30-50 (IAQILFVIFLVLFVISIIAGG).

It belongs to the UPF0391 family.

Its subcellular location is the cell membrane. This chain is UPF0391 membrane protein HCH_04387, found in Hahella chejuensis (strain KCTC 2396).